A 258-amino-acid chain; its full sequence is Hydroxyacylglutathione hydrolase (258 aa).

Positions 56, 58, 60, 61, 112, 132, and 170 each coordinate Zn(2+).

This sequence belongs to the metallo-beta-lactamase superfamily. Glyoxalase II family. In terms of assembly, monomer. Zn(2+) serves as cofactor.

The enzyme catalyses an S-(2-hydroxyacyl)glutathione + H2O = a 2-hydroxy carboxylate + glutathione + H(+). It participates in secondary metabolite metabolism; methylglyoxal degradation; (R)-lactate from methylglyoxal: step 2/2. In terms of biological role, thiolesterase that catalyzes the hydrolysis of S-D-lactoyl-glutathione to form glutathione and D-lactic acid. The polypeptide is Hydroxyacylglutathione hydrolase (Pseudomonas aeruginosa (strain ATCC 15692 / DSM 22644 / CIP 104116 / JCM 14847 / LMG 12228 / 1C / PRS 101 / PAO1)).